The sequence spans 176 residues: Interleukin-1 receptor antagonist protein (176 aa).

The signal sequence occupies residues 1–25 (METCRCPLSYLISFLLFLSHSETAC). Cysteine 91 and cysteine 141 are joined by a disulfide. The N-linked (GlcNAc...) asparagine glycan is linked to asparagine 109.

It belongs to the IL-1 family.

The protein resides in the secreted. Its function is as follows. Anti-inflammatory antagonist of interleukin-1 family of proinflammatory cytokines such as interleukin-1beta/IL1B and interleukin-1alpha/IL1A. Protects from immune dysregulation and uncontrolled systemic inflammation triggered by IL1 for a range of innate stimulatory agents such as pathogens. This is Interleukin-1 receptor antagonist protein (IL1RN) from Canis lupus familiaris (Dog).